We begin with the raw amino-acid sequence, 547 residues long: Sodium/hydrogen exchanger 9B2 (547 aa).

Residues 1-68 form a disordered region; the sequence is MEDEDKTAEC…PQDSPTEPNG (68 aa). Topologically, residues 1 to 86 are cytoplasmic; that stretch reads MEDEDKTAEC…ACPPRGCLAR (86 aa). Over residues 23 to 45 the composition is skewed to basic and acidic residues; sequence APPHHELQEERVMSLRGTDRSEP. Residue Ser49 is modified to Phosphoserine. A helical membrane pass occupies residues 87-104; that stretch reads VITNGTMVVLLWAMVWSV. Over 105–113 the chain is Extracellular; the sequence is TGPECLPGG. The helical transmembrane segment at 114–133 threads the bilayer; that stretch reads NLFGIIILFYCSITGGKLFG. Topologically, residues 134–144 are cytoplasmic; the sequence is LIKFPTLPPLP. The helical transmembrane segment at 145-161 threads the bilayer; the sequence is PLLGMLLAGFLLRNIPV. Residues 162-171 are Extracellular-facing; the sequence is INDSVRIQHK. The chain crosses the membrane as a helical span at residues 172 to 189; that stretch reads WSSSLRSIALSVILVRAG. Residues 190 to 200 lie on the Cytoplasmic side of the membrane; it reads LGLDSKALRKL. Residues 201–227 form a helical membrane-spanning segment; it reads KGVCVRLAMGPCIVEACASAILSHFLM. Residues 228 to 233 lie on the Extracellular side of the membrane; the sequence is GLPWQW. A helical transmembrane segment spans residues 234 to 242; the sequence is GFILGFVVG. The Cytoplasmic segment spans residues 243 to 270; the sequence is AVSPAVVVPSMLLLQEGGYGVGKGIPTL. 4 residues coordinate Na(+): Val244, Gly275, Asp278, and Asp279. The helical transmembrane segment at 271 to 290 threads the bilayer; it reads LMAAGSFDDILAITGFNTCL. At 291–300 the chain is on the extracellular side; sequence GVAFSTGSTV. A helical transmembrane segment spans residues 301 to 324; it reads FNIFRGILEVVIGVAAGSFLGFFI. The Cytoplasmic portion of the chain corresponds to 325–339; that stretch reads QYFPSRDQDNLVWKR. A helical transmembrane segment spans residues 340 to 357; it reads AFLVLGFAVLAVFSSVYF. The Extracellular segment spans residues 358-361; it reads SFPG. The helical transmembrane segment at 362–373 threads the bilayer; that stretch reads SGGLCTLVMAFL. Topologically, residues 374 to 390 are cytoplasmic; sequence AGMRWTDKKSEVEKVIA. The chain crosses the membrane as a helical span at residues 391–411; it reads VTWDVFQPLLFGLIGAEVSIV. Over 412-417 the chain is Extracellular; the sequence is SLRAET. The chain crosses the membrane as a helical span at residues 418–440; that stretch reads VGLCVATLSIAVLIRILTTFLMV. Residues 441–461 lie on the Cytoplasmic side of the membrane; sequence CFAGFNIKEKIFISFAWLPKA. A helical membrane pass occupies residues 462 to 473; it reads TVQAAIGSVALD. At 474-486 the chain is on the extracellular side; the sequence is TARSHGEKQLEDY. Residues 487–509 form a helical membrane-spanning segment; that stretch reads GMDVLTVAFLAILITAPIGSLLI. Residues 510–547 are Cytoplasmic-facing; it reads GLLGPRVLQKSEHRTEEEVQGETSAHIQRKPEDSITEA. Residues 522-547 are disordered; it reads HRTEEEVQGETSAHIQRKPEDSITEA. The span at 538–547 shows a compositional bias: basic and acidic residues; it reads RKPEDSITEA.

Belongs to the monovalent cation:proton antiporter 1 (CPA1) transporter (TC 2.A.36) family. In terms of assembly, homodimer; dimerization is essential for SLC9B2 activity. Lipids seem to play a role in the stabilization of the dimerization subdomain. In terms of tissue distribution, widely expressed. However expression seems to be restricted to specific cell types within individual organs, e.g. osteoclasts in the bone, distal tubules of the kidney or beta-cells of Langerhans islets. In sperm specifically present in the principal piece of sperm tail (at protein level).

It localises to the cell membrane. It is found in the mitochondrion membrane. The protein resides in the endosome membrane. The protein localises to the lysosome membrane. Its subcellular location is the recycling endosome membrane. It localises to the cytoplasmic vesicle. It is found in the secretory vesicle. The protein resides in the synaptic vesicle membrane. The protein localises to the cell projection. Its subcellular location is the cilium. It localises to the flagellum membrane. It is found in the basolateral cell membrane. The protein resides in the apical cell membrane. It carries out the reaction Na(+)(in) + H(+)(out) = Na(+)(out) + H(+)(in). The enzyme catalyses Li(+)(out) + H(+)(in) = Li(+)(in) + H(+)(out). The catalysed reaction is Li(+)(in) + Na(+)(out) = Li(+)(out) + Na(+)(in). With respect to regulation, allosterically inhibited by the N-terminal domain. Inhibited by phloretin. Electroneutral Na(+) Li(+)/H(+) antiporter that extrudes Na(+) or Li(+) in exchange for external protons across the membrane. Uses the proton gradient/membrane potential to extrude sodium. Contributes to the regulation of intracellular pH and sodium homeostasis. Also able to mediate Na(+)/Li(+) antiporter activity in kidney. May play a physiological role in renal tubular function and blood pressure homeostasis. Plays an important role for insulin secretion and clathrin-mediated endocytosis in beta-cells. Involved in sperm motility and fertility. It is controversial whether SLC9B2 plays a role in osteoclast differentiation or not. This chain is Sodium/hydrogen exchanger 9B2, found in Mus musculus (Mouse).